Here is an 876-residue protein sequence, read N- to C-terminus: Vacuolar protein sorting-associated protein 39 homolog (876 aa).

A CNH domain is found at 14–310; the sequence is GVQIESIAAY…KFLVHADKGT (297 aa). One copy of the CHCR repeat lies at 578 to 741; it reads ELIEVESLPR…ILIPPTQPLY (164 aa).

It belongs to the VAM6/VPS39 family. As to quaternary structure, part of the homotypic fusion and vacuole protein sorting (HOPS) complex, composed of Vps16A, car/Vps33A, dor/Vps18, Vps39, Vps11 and lt/Vps41. Interacts with Rab2 (GTP-bound form); the interaction is probably direct.

It localises to the cytoplasm. The protein localises to the lysosome membrane. The protein resides in the late endosome membrane. It is found in the late endosome. Its subcellular location is the lysosome. Part of the homotypic fusion and vacuole protein sorting (HOPS) tethering complex involved in endo-lysosomal vesicle trafficking and lysosome biogenesis. The HOPS complex facilitates docking and fusion of lysosomes with late endosomes and several other types of vesicles. The HOPS complex is also involved in autophagy and crinophagy (the elimination of unused secretory granules through their fusion with lysosomes). The HOPS complex mediates autophagocitic flux, probably by binding autophagosome-associated Syx17/syntaxin 17, promoting assembly of the trans-SNARE complex and instigating autophagosome-lysosome fusion. Independent of Syx17/syntaxin 17, HOPS is involved in biosynthetic transport to lysosomes and lysosome-related organelles such as eye-pigment granules. Required for autophagocytosis-dependent remodeling of myofibrils and transverse-tubules (T-tubules) during metamorphosis. This is Vacuolar protein sorting-associated protein 39 homolog from Drosophila melanogaster (Fruit fly).